Reading from the N-terminus, the 379-residue chain is Chaperone protein DnaJ (379 aa).

The J domain occupies 5–70 (DYYEILGVPK…QKRAAYDQYG (66 aa)). The CR-type zinc finger occupies 134-212 (GVTKEIRIPT…CHGHGRIEKT (79 aa)). The Zn(2+) site is built by Cys147, Cys150, Cys164, Cys167, Cys186, Cys189, Cys200, and Cys203. CXXCXGXG motif repeat units follow at residues 147 to 154 (CEVCHGSG), 164 to 171 (CPTCHGAG), 186 to 193 (CPHCQGRG), and 200 to 207 (CNSCHGHG).

The protein belongs to the DnaJ family. As to quaternary structure, homodimer. Zn(2+) is required as a cofactor.

Its subcellular location is the cytoplasm. Participates actively in the response to hyperosmotic and heat shock by preventing the aggregation of stress-denatured proteins and by disaggregating proteins, also in an autonomous, DnaK-independent fashion. Unfolded proteins bind initially to DnaJ; upon interaction with the DnaJ-bound protein, DnaK hydrolyzes its bound ATP, resulting in the formation of a stable complex. GrpE releases ADP from DnaK; ATP binding to DnaK triggers the release of the substrate protein, thus completing the reaction cycle. Several rounds of ATP-dependent interactions between DnaJ, DnaK and GrpE are required for fully efficient folding. Also involved, together with DnaK and GrpE, in the DNA replication of plasmids through activation of initiation proteins. This is Chaperone protein DnaJ from Cronobacter sakazakii (strain ATCC BAA-894) (Enterobacter sakazakii).